Here is a 144-residue protein sequence, read N- to C-terminus: HTH-type transcriptional regulator LrpC (144 aa).

An HTH asnC-type domain is found at 3–64 (LDQIDLNIIE…EVDQKKLGLP (62 aa)). Residues 22-41 (MRELGRKIKLSPPSVTERVR) constitute a DNA-binding region (H-T-H motif).

Transcriptional regulator with a possible role in regulation of amino acid metabolism. Plays a role in the growth phase transition. The sequence is that of HTH-type transcriptional regulator LrpC (lrpC) from Bacillus subtilis (strain 168).